The chain runs to 113 residues: uncharacterized protein (113 aa).

The CHY-type; degenerate zinc finger occupies 16-96 (LVDNETRCFH…STVHCKYCNH (81 aa)). C23, H25, C46, C49, C73, C76, C91, and C94 together coordinate Zn(2+).

It localises to the cytoplasm. It is found in the nucleus. This is an uncharacterized protein from Schizosaccharomyces pombe (strain 972 / ATCC 24843) (Fission yeast).